Here is a 339-residue protein sequence, read N- to C-terminus: Phenylalanine--tRNA ligase alpha subunit (339 aa).

Glu-253 serves as a coordination point for Mg(2+).

The protein belongs to the class-II aminoacyl-tRNA synthetase family. Phe-tRNA synthetase alpha subunit type 1 subfamily. Tetramer of two alpha and two beta subunits. It depends on Mg(2+) as a cofactor.

It is found in the cytoplasm. It catalyses the reaction tRNA(Phe) + L-phenylalanine + ATP = L-phenylalanyl-tRNA(Phe) + AMP + diphosphate + H(+). This is Phenylalanine--tRNA ligase alpha subunit from Alcanivorax borkumensis (strain ATCC 700651 / DSM 11573 / NCIMB 13689 / SK2).